Here is a 209-residue protein sequence, read N- to C-terminus: Octanoyltransferase (209 aa).

One can recognise a BPL/LPL catalytic domain in the interval glycine 30 to lysine 209. Residues arginine 69–histidine 76, alanine 143–glycine 145, and glycine 156–alanine 158 contribute to the substrate site. The active-site Acyl-thioester intermediate is cysteine 174.

This sequence belongs to the LipB family.

It is found in the cytoplasm. The catalysed reaction is octanoyl-[ACP] + L-lysyl-[protein] = N(6)-octanoyl-L-lysyl-[protein] + holo-[ACP] + H(+). It participates in protein modification; protein lipoylation via endogenous pathway; protein N(6)-(lipoyl)lysine from octanoyl-[acyl-carrier-protein]: step 1/2. Its function is as follows. Catalyzes the transfer of endogenously produced octanoic acid from octanoyl-acyl-carrier-protein onto the lipoyl domains of lipoate-dependent enzymes. Lipoyl-ACP can also act as a substrate although octanoyl-ACP is likely to be the physiological substrate. The protein is Octanoyltransferase of Rickettsia bellii (strain OSU 85-389).